Reading from the N-terminus, the 89-residue chain is Pigment dispersing factor homolog pdf-2 (89 aa).

Residues 1 to 27 (MSSRISVSLLLLAVVATMFFTANVVDA) form the signal peptide.

In terms of biological role, probable ligand of isoforms a and b of the calcitonin receptor-like protein, pdfr-1, a G-protein coupled receptor. May not signal through isoform c of pdfr-1. Involved in locomotion; may play a role in circadian rhythms of locomotor activity. Modulator of egg-laying. In Caenorhabditis elegans, this protein is Pigment dispersing factor homolog pdf-2.